The chain runs to 280 residues: Adenosylcobinamide-GDP ribazoletransferase (280 aa).

7 helical membrane passes run 4–24 (YLLAFKSGFGFLSTIPVGITM), 34–54 (IFFYPVVGAVLGLLIGIVAYA), 58–78 (VFPGPVLAALIMGFVYYITGF), 108–128 (TLGTGGVAFGILVLLAFYGSI), 136–156 (IAAFGSNLPFLMFASMFIAEV), 197–217 (LIGFIFGAVVCCLPFGLIGLI), and 254–274 (ITALIVIAVTLKLSLNGYLGG).

Belongs to the CobS family. Mg(2+) is required as a cofactor.

The protein resides in the cell membrane. It catalyses the reaction alpha-ribazole + adenosylcob(III)inamide-GDP = adenosylcob(III)alamin + GMP + H(+). The enzyme catalyses alpha-ribazole 5'-phosphate + adenosylcob(III)inamide-GDP = adenosylcob(III)alamin 5'-phosphate + GMP + H(+). It functions in the pathway cofactor biosynthesis; adenosylcobalamin biosynthesis; adenosylcobalamin from cob(II)yrinate a,c-diamide: step 7/7. Joins adenosylcobinamide-GDP and alpha-ribazole to generate adenosylcobalamin (Ado-cobalamin). Also synthesizes adenosylcobalamin 5'-phosphate from adenosylcobinamide-GDP and alpha-ribazole 5'-phosphate. This is Adenosylcobinamide-GDP ribazoletransferase from Methanosarcina mazei (strain ATCC BAA-159 / DSM 3647 / Goe1 / Go1 / JCM 11833 / OCM 88) (Methanosarcina frisia).